The following is a 436-amino-acid chain: UPF0597 protein YhaM (436 aa).

It belongs to the UPF0597 family.

This chain is UPF0597 protein YhaM, found in Shigella boydii serotype 18 (strain CDC 3083-94 / BS512).